The primary structure comprises 356 residues: Protein pelota homolog (356 aa).

Belongs to the eukaryotic release factor 1 family. Pelota subfamily. In terms of assembly, monomer. It depends on a divalent metal cation as a cofactor.

The protein resides in the cytoplasm. Its function is as follows. May function in recognizing stalled ribosomes, interact with stem-loop structures in stalled mRNA molecules, and effect endonucleolytic cleavage of the mRNA. May play a role in the release non-functional ribosomes and degradation of damaged mRNAs. Has endoribonuclease activity. This chain is Protein pelota homolog, found in Pyrococcus abyssi (strain GE5 / Orsay).